Consider the following 387-residue polypeptide: Succinate--CoA ligase [ADP-forming] subunit beta (387 aa).

Positions 9–244 constitute an ATP-grasp domain; sequence KEVLRKFGVA…LNEEEPSEIE (236 aa). ATP contacts are provided by residues Lys-46, 53 to 55, Glu-99, Cys-102, and Glu-107; that span reads GRG. Mg(2+) contacts are provided by Asn-199 and Asp-213. Substrate is bound by residues Asn-264 and 321-323; that span reads GIM.

This sequence belongs to the succinate/malate CoA ligase beta subunit family. In terms of assembly, heterotetramer of two alpha and two beta subunits. Mg(2+) is required as a cofactor.

It catalyses the reaction succinate + ATP + CoA = succinyl-CoA + ADP + phosphate. It carries out the reaction GTP + succinate + CoA = succinyl-CoA + GDP + phosphate. The protein operates within carbohydrate metabolism; tricarboxylic acid cycle; succinate from succinyl-CoA (ligase route): step 1/1. Its function is as follows. Succinyl-CoA synthetase functions in the citric acid cycle (TCA), coupling the hydrolysis of succinyl-CoA to the synthesis of either ATP or GTP and thus represents the only step of substrate-level phosphorylation in the TCA. The beta subunit provides nucleotide specificity of the enzyme and binds the substrate succinate, while the binding sites for coenzyme A and phosphate are found in the alpha subunit. This chain is Succinate--CoA ligase [ADP-forming] subunit beta, found in Bdellovibrio bacteriovorus (strain ATCC 15356 / DSM 50701 / NCIMB 9529 / HD100).